The following is an 831-amino-acid chain: DNA ligase (831 aa).

NAD(+) contacts are provided by residues 34 to 38, 83 to 84, and Glu114; these read DADYD and SL. The active-site N6-AMP-lysine intermediate is Lys116. Residues Arg137, Glu174, Lys291, and Lys315 each contribute to the NAD(+) site. Residues Cys409, Cys412, Cys427, and Cys433 each coordinate Zn(2+). The 83-residue stretch at 749 to 831 folds into the BRCT domain; it reads AHTAPLNGQS…LDFLEQYSAQ (83 aa).

It belongs to the NAD-dependent DNA ligase family. LigA subfamily. It depends on Mg(2+) as a cofactor. Mn(2+) serves as cofactor.

The catalysed reaction is NAD(+) + (deoxyribonucleotide)n-3'-hydroxyl + 5'-phospho-(deoxyribonucleotide)m = (deoxyribonucleotide)n+m + AMP + beta-nicotinamide D-nucleotide.. DNA ligase that catalyzes the formation of phosphodiester linkages between 5'-phosphoryl and 3'-hydroxyl groups in double-stranded DNA using NAD as a coenzyme and as the energy source for the reaction. It is essential for DNA replication and repair of damaged DNA. This chain is DNA ligase, found in Xylella fastidiosa (strain M12).